The primary structure comprises 173 residues: Archaemetzincin (173 aa).

Residue H130 participates in Zn(2+) binding. E131 acts as the Proton acceptor in catalysis. Residues H134, H140, C141, C146, C165, and C168 each coordinate Zn(2+).

This sequence belongs to the peptidase M54 family. In terms of assembly, monomer. Zn(2+) is required as a cofactor.

Probable zinc metalloprotease whose natural substrate is unknown. This chain is Archaemetzincin, found in Natronomonas pharaonis (strain ATCC 35678 / DSM 2160 / CIP 103997 / JCM 8858 / NBRC 14720 / NCIMB 2260 / Gabara) (Halobacterium pharaonis).